A 368-amino-acid polypeptide reads, in one-letter code: Phosphate acyltransferase (368 aa).

The tract at residues 334–368 is disordered; the sequence is AAPLGESGRDANGAGQASPSAGQPAEPSAALSSKT.

This sequence belongs to the PlsX family. In terms of assembly, homodimer. Probably interacts with PlsY.

It localises to the cytoplasm. The enzyme catalyses a fatty acyl-[ACP] + phosphate = an acyl phosphate + holo-[ACP]. It participates in lipid metabolism; phospholipid metabolism. Catalyzes the reversible formation of acyl-phosphate (acyl-PO(4)) from acyl-[acyl-carrier-protein] (acyl-ACP). This enzyme utilizes acyl-ACP as fatty acyl donor, but not acyl-CoA. The sequence is that of Phosphate acyltransferase from Burkholderia pseudomallei (strain 1106a).